A 219-amino-acid polypeptide reads, in one-letter code: Hemolysin-3 (219 aa).

A run of 7 helical transmembrane segments spans residues 19–39 (AITHGIGAILSIPALIILIIH), 49–69 (VVAFTVYGVSMFLLYLFSTLL), 83–103 (ILDHSAIYLLIAGTYTPFLLI), 112–132 (TLLAIIWTLAIGGIIFKIFFV), 138–158 (ASTLCYIIMGWLIIVAIKPLY), 165–185 (GFSLLLAGGILYSVGAIFFLW), and 194–214 (IWHLFVLGGSAMMFFCVLFYV).

The protein belongs to the UPF0073 (Hly-III) family.

It localises to the cell membrane. Its function is as follows. Might be virulent against a mammalian host; when expressed in E.coli, the soluble extract has hemolytic activity on human erythrocytes. The activity is not inhibited by cholesterol or activated by 2-mercaptoethanol. Might be pore-forming protein. Its in vivo role in virulence is untested, nor has it been shown to be secreted by B.cereus. This Bacillus cereus protein is Hemolysin-3.